Consider the following 363-residue polypeptide: Peroxidase (363 aa).

The first 20 residues, 1-20 (MKLSLLSTFAAVIIGALALP), serve as a signal peptide directing secretion. Residue Gln21 is modified to Pyrrolidone carboxylic acid. Intrachain disulfides connect Cys31–Cys43, Cys42–Cys312, Cys62–Cys148, and Cys276–Cys341. The active-site Proton acceptor is the His75. The Ca(2+) site is built by Asp76, Gly94, Asp96, and Ser98. Asn162 is a glycosylation site (N-linked (GlcNAc...) (high mannose) asparagine). A heme b-binding site is contributed by His203. The Ca(2+) site is built by Ser204, Asp221, Thr223, Val226, and Asp228. O-linked (Man...) serine glycosylation occurs at Ser358.

It belongs to the peroxidase family. Ligninase subfamily. Requires Ca(2+) as cofactor. Heme b is required as a cofactor.

The protein localises to the secreted. It catalyses the reaction 2 a phenolic donor + H2O2 = 2 a phenolic radical donor + 2 H2O. This chain is Peroxidase (CIP1), found in Coprinopsis cinerea (strain Okayama-7 / 130 / ATCC MYA-4618 / FGSC 9003) (Inky cap fungus).